The sequence spans 478 residues: Noelin-3 (478 aa).

The signal sequence occupies residues 1-23; sequence MSAPLLKLGAVLSTMAMISNWMS. N33, N95, N179, N299, and N465 each carry an N-linked (GlcNAc...) asparagine glycan. Positions 77–217 form a coiled coil; the sequence is CSRDAKSRQL…TRLRDCMKKL (141 aa). The 253-residue stretch at 218-470 folds into the Olfactomedin-like domain; that stretch reads TCGKLMKITG…QVLFNVTLFH (253 aa). C219 and C401 form a disulfide bridge.

In terms of assembly, peripherally associated with AMPAR complex. AMPAR complex consists of an inner core made of 4 pore-forming GluA/GRIA proteins (GRIA1, GRIA2, GRIA3 and GRIA4) and 4 major auxiliary subunits arranged in a twofold symmetry. One of the two pairs of distinct binding sites is occupied either by CNIH2, CNIH3 or CACNG2, CACNG3. The other harbors CACNG2, CACNG3, CACNG4, CACNG8 or GSG1L. This inner core of AMPAR complex is complemented by outer core constituents binding directly to the GluA/GRIA proteins at sites distinct from the interaction sites of the inner core constituents. Outer core constituents include at least PRRT1, PRRT2, CKAMP44/SHISA9, FRRS1L and NRN1. The proteins of the inner and outer core serve as a platform for other, more peripherally associated AMPAR constituents, including OLFM3. Alone or in combination, these auxiliary subunits control the gating and pharmacology of the AMPAR complex and profoundly impact their biogenesis and protein processing. Homodimer. Interacts with MYOC. Interacts with OLFM2. As to expression, expressed in the brain (at protein level). Also expressed in the retina, mainly in the ganglion cell layer and in the amacrine cell subregion of the inner nuclear layer. Expressed at high levels in the epithelial cells of the posterior iris and the ciliary body and, at lower levels, in the trabecular meshwork. Isoform 2 preferentially expressed in retina and brain, while isoform 1 preferentially expressed in the tissues of the eye angle.

It localises to the secreted. Its subcellular location is the synapse. The sequence is that of Noelin-3 (Olfm3) from Rattus norvegicus (Rat).